A 330-amino-acid chain; its full sequence is Aspartate--ammonia ligase (330 aa).

This sequence belongs to the class-II aminoacyl-tRNA synthetase family. AsnA subfamily.

It localises to the cytoplasm. The enzyme catalyses L-aspartate + NH4(+) + ATP = L-asparagine + AMP + diphosphate + H(+). Its pathway is amino-acid biosynthesis; L-asparagine biosynthesis; L-asparagine from L-aspartate (ammonia route): step 1/1. The polypeptide is Aspartate--ammonia ligase (Escherichia coli O81 (strain ED1a)).